A 539-amino-acid chain; its full sequence is Tripartite motif-containing protein 26 (539 aa).

An RING-type zinc finger spans residues 16-57; sequence CSICLDYLRDPVTIDCGHVFCRSCTTDVRPISGSRPVCPLCK. The B box-type zinc-finger motif lies at 97-138; that stretch reads QDAKLCERHREKLHYYCEDDGKLLCVMCRESREHRPHTAVLM. 4 residues coordinate Zn(2+): Cys102, His105, Cys124, and His130. Positions 188 to 227 form a coiled coil; sequence IVAEFEQGHQFLREREEHLLEQLAKLEQELTEGREKFKSR. The region spanning 295–539 is the B30.2/SPRY domain; the sequence is RGLREFQGKL…WPGTRLLLRP (245 aa). The interval 376–437 is disordered; sequence REGWSEDEEE…EEEEEVLESC (62 aa). Over residues 380–434 the composition is skewed to acidic residues; sequence SEDEEEGDEEEEGEEEEEEEEAGYGDGYDDWETDEDEESLGDEEEEEEEEEEEVL.

It belongs to the TRIM/RBCC family. As to quaternary structure, interacts with TBK1; this interaction bridges together TBK1 and NEMO in order to activate TBK1. Interacts with INCA1. Autoubiquitinates upon viral infection. In turn, autoubiquitinated TRIM26 recruits NEMO and bridges TBK1-NEMO interaction.

It is found in the cytoplasm. It localises to the nucleus. It carries out the reaction S-ubiquitinyl-[E2 ubiquitin-conjugating enzyme]-L-cysteine + [acceptor protein]-L-lysine = [E2 ubiquitin-conjugating enzyme]-L-cysteine + N(6)-ubiquitinyl-[acceptor protein]-L-lysine.. E3 ubiquitin-protein ligase which regulates the IFN-beta production and antiviral response downstream of various DNA-encoded pattern-recognition receptors (PRRs). Also plays a central role in determining the response to different forms of oxidative stress by controlling levels of DNA glycosylases NEIL1, NEIL3 and NTH1 that are involved in repair of damaged DNA. Promotes nuclear IRF3 ubiquitination and proteasomal degradation. Bridges together TBK1 and NEMO during the innate response to viral infection leading to the activation of TBK1. Positively regulates LPS-mediated inflammatory innate immune response by catalyzing the 'Lys-11'-linked polyubiquitination of TAB1 to enhance its activation and subsequent NF-kappa-B and MAPK signaling. In a manner independent of its catalytic activity, inhibits WWP2, a SOX2-directed E3 ubiquitin ligase, and thus protects SOX2 from polyubiquitination and proteasomal degradation. Ubiquitinates the histone acetyltransferase protein complex component PHF20 and thereby triggers its degradation in the nucleus after its recruitment by the histone demethylase KDM6B, serving as a scaffold protein. Upon induction by TGF-beta, ubiquitinates the TFIID component TAF7 for proteasomal degradation. Induces ferroptosis by ubiquitinating SLC7A11, a critical protein for lipid reactive oxygen species (ROS) scavenging. In Pan troglodytes (Chimpanzee), this protein is Tripartite motif-containing protein 26 (TRIM26).